A 234-amino-acid chain; its full sequence is Proteasome subunit alpha type-2 (234 aa).

A2 is subject to N-acetylalanine. Y6 carries the post-translational modification Phosphotyrosine. Phosphoserine occurs at positions 7, 14, and 16. Y24 bears the Phosphotyrosine mark. K70 is subject to N6-acetyllysine. Residues Y76 and Y121 each carry the phosphotyrosine modification. Residue K171 is modified to N6-acetyllysine.

Belongs to the peptidase T1A family. The 26S proteasome consists of a 20S proteasome core and two 19S regulatory subunits. The 20S proteasome core is a barrel-shaped complex made of 28 subunits that are arranged in four stacked rings. The two outer rings are each formed by seven alpha subunits, and the two inner rings are formed by seven beta subunits. The proteolytic activity is exerted by three beta-subunits PSMB5, PSMB6 and PSMB7. Phosphorylated on tyrosine residues; which may be important for nuclear import.

The protein localises to the cytoplasm. It localises to the nucleus. Its function is as follows. Component of the 20S core proteasome complex involved in the proteolytic degradation of most intracellular proteins. This complex plays numerous essential roles within the cell by associating with different regulatory particles. Associated with two 19S regulatory particles, forms the 26S proteasome and thus participates in the ATP-dependent degradation of ubiquitinated proteins. The 26S proteasome plays a key role in the maintenance of protein homeostasis by removing misfolded or damaged proteins that could impair cellular functions, and by removing proteins whose functions are no longer required. Associated with the PA200 or PA28, the 20S proteasome mediates ubiquitin-independent protein degradation. This type of proteolysis is required in several pathways including spermatogenesis (20S-PA200 complex) or generation of a subset of MHC class I-presented antigenic peptides (20S-PA28 complex). In Bos taurus (Bovine), this protein is Proteasome subunit alpha type-2 (PSMA2).